Reading from the N-terminus, the 2280-residue chain is Acetyl-CoA carboxylase (2280 aa).

The 510-residue stretch at 68–577 (VITSILIANN…TTGWLDRLIA (510 aa)) folds into the Biotin carboxylation domain. An ATP-grasp domain is found at 226–418 (ETNIVTVDDD…LPAAQLQVAM (193 aa)). 266 to 271 (GGGGKG) contacts ATP. 3 residues coordinate Mn(2+): Glu-375, Glu-389, and Asn-391. Residue Arg-393 is part of the active site. The 75-residue stretch at 704–778 (LEQENDPTQL…DAGDILGILT (75 aa)) folds into the Biotinyl-binding domain. Lys-745 bears the N6-biotinyllysine mark. Residues Ser-1179 and Ser-1181 each carry the phosphoserine modification. One can recognise a CoA carboxyltransferase N-terminal domain in the interval 1524 to 1863 (PYPTKEWLQP…KRNNPVPISP (340 aa)). Residues 1524–2181 (PYPTKEWLQP…EHYALQKITQ (658 aa)) form a carboxyltransferase region. Residues Arg-1772, Lys-2074, and Arg-2076 each coordinate CoA. In terms of domain architecture, CoA carboxyltransferase C-terminal spans 1867–2181 (TWDRDVEFYP…EHYALQKITQ (315 aa)).

In terms of assembly, interacts with sad1. The cofactor is biotin. Mn(2+) serves as cofactor.

It localises to the cytoplasm. It carries out the reaction hydrogencarbonate + acetyl-CoA + ATP = malonyl-CoA + ADP + phosphate + H(+). The enzyme catalyses N(6)-biotinyl-L-lysyl-[protein] + hydrogencarbonate + ATP = N(6)-carboxybiotinyl-L-lysyl-[protein] + ADP + phosphate + H(+). Its pathway is lipid metabolism; malonyl-CoA biosynthesis; malonyl-CoA from acetyl-CoA: step 1/1. Its activity is regulated as follows. By phosphorylation. Carries out three functions: biotin carboxyl carrier protein, biotin carboxylase and carboxyltransferase. This chain is Acetyl-CoA carboxylase (cut6), found in Schizosaccharomyces pombe (strain 972 / ATCC 24843) (Fission yeast).